Consider the following 293-residue polypeptide: uncharacterized protein (293 aa).

The region spanning 1–58 (MELKQLITFITAAEHVNFTLTAKMLNYAQSSVTSQIKSLEEEIGTPLFERLGKRLILT) is the HTH lysR-type domain. The segment at residues 18 to 37 (FTLTAKMLNYAQSSVTSQIK) is a DNA-binding region (H-T-H motif).

The protein belongs to the LysR transcriptional regulatory family.

Its subcellular location is the cytoplasm. This is an uncharacterized protein from Bacillus subtilis (strain 168).